A 42-amino-acid polypeptide reads, in one-letter code: Daisho1 (42 aa).

An N-terminal signal peptide occupies residues 1–20 (MKFFQAAALLLAMFAALANA). Positions 21 to 26 (EPVPQP) are cleaved as a propeptide — removed by a dipeptidylpeptidase. T41 is modified (threonine amide).

In terms of tissue distribution, hemolymph (at protein level).

It is found in the secreted. Peptide which plays a role in the humoral immune response to a subset of filamentous fungi, including F.oxysporum and F.verticillioides. The protein is Daisho1 of Drosophila melanogaster (Fruit fly).